The primary structure comprises 135 residues: DNA-directed RNA polymerase subunit omega (135 aa).

This sequence belongs to the RNA polymerase subunit omega family. As to quaternary structure, the RNAP catalytic core consists of 2 alpha, 1 beta, 1 beta' and 1 omega subunit. When a sigma factor is associated with the core the holoenzyme is formed, which can initiate transcription.

It catalyses the reaction RNA(n) + a ribonucleoside 5'-triphosphate = RNA(n+1) + diphosphate. Its function is as follows. Promotes RNA polymerase assembly. Latches the N- and C-terminal regions of the beta' subunit thereby facilitating its interaction with the beta and alpha subunits. The polypeptide is DNA-directed RNA polymerase subunit omega (Sinorhizobium medicae (strain WSM419) (Ensifer medicae)).